A 95-amino-acid chain; its full sequence is uncharacterized protein (95 aa).

This is an uncharacterized protein from Bacillus subtilis (strain 168).